The sequence spans 274 residues: Formamidopyrimidine-DNA glycosylase (274 aa).

The active-site Schiff-base intermediate with DNA is proline 2. The active-site Proton donor is glutamate 3. Lysine 58 serves as the catalytic Proton donor; for beta-elimination activity. Residues histidine 91, arginine 110, and lysine 152 each coordinate DNA. Residues 237–271 form an FPG-type zinc finger; that stretch reads KVYGRKNLPCLVCENKIETVVIAGRHSAFCPHCQP. Arginine 261 functions as the Proton donor; for delta-elimination activity in the catalytic mechanism.

It belongs to the FPG family. Monomer. Zn(2+) serves as cofactor.

The catalysed reaction is Hydrolysis of DNA containing ring-opened 7-methylguanine residues, releasing 2,6-diamino-4-hydroxy-5-(N-methyl)formamidopyrimidine.. It catalyses the reaction 2'-deoxyribonucleotide-(2'-deoxyribose 5'-phosphate)-2'-deoxyribonucleotide-DNA = a 3'-end 2'-deoxyribonucleotide-(2,3-dehydro-2,3-deoxyribose 5'-phosphate)-DNA + a 5'-end 5'-phospho-2'-deoxyribonucleoside-DNA + H(+). Functionally, involved in base excision repair of DNA damaged by oxidation or by mutagenic agents. Acts as a DNA glycosylase that recognizes and removes damaged bases. Has a preference for oxidized purines, such as 7,8-dihydro-8-oxoguanine (8-oxoG). Has AP (apurinic/apyrimidinic) lyase activity and introduces nicks in the DNA strand. Cleaves the DNA backbone by beta-delta elimination to generate a single-strand break at the site of the removed base with both 3'- and 5'-phosphates. In Legionella pneumophila subsp. pneumophila (strain Philadelphia 1 / ATCC 33152 / DSM 7513), this protein is Formamidopyrimidine-DNA glycosylase.